The primary structure comprises 296 residues: Urease accessory protein UreD (296 aa).

The protein belongs to the UreD family. UreD, UreF and UreG form a complex that acts as a GTP-hydrolysis-dependent molecular chaperone, activating the urease apoprotein by helping to assemble the nickel containing metallocenter of UreC. The UreE protein probably delivers the nickel.

It is found in the cytoplasm. Functionally, required for maturation of urease via the functional incorporation of the urease nickel metallocenter. This Synechococcus sp. (strain CC9311) protein is Urease accessory protein UreD.